Reading from the N-terminus, the 513-residue chain is ATP synthase subunit alpha (513 aa).

169–176 lines the ATP pocket; it reads GDRQCGKT.

The protein belongs to the ATPase alpha/beta chains family. F-type ATPases have 2 components, CF(1) - the catalytic core - and CF(0) - the membrane proton channel. CF(1) has five subunits: alpha(3), beta(3), gamma(1), delta(1), epsilon(1). CF(0) has three main subunits: a(1), b(2) and c(9-12). The alpha and beta chains form an alternating ring which encloses part of the gamma chain. CF(1) is attached to CF(0) by a central stalk formed by the gamma and epsilon chains, while a peripheral stalk is formed by the delta and b chains.

It localises to the cell inner membrane. It catalyses the reaction ATP + H2O + 4 H(+)(in) = ADP + phosphate + 5 H(+)(out). Produces ATP from ADP in the presence of a proton gradient across the membrane. The alpha chain is a regulatory subunit. The sequence is that of ATP synthase subunit alpha from Burkholderia vietnamiensis (strain G4 / LMG 22486) (Burkholderia cepacia (strain R1808)).